The following is a 109-amino-acid chain: Small ribosomal subunit protein bS6 (109 aa).

This sequence belongs to the bacterial ribosomal protein bS6 family.

Functionally, binds together with bS18 to 16S ribosomal RNA. This chain is Small ribosomal subunit protein bS6, found in Dehalococcoides mccartyi (strain ATCC BAA-2266 / KCTC 15142 / 195) (Dehalococcoides ethenogenes (strain 195)).